The sequence spans 338 residues: MTTESIFITTLPMDFNSQFDNITIGLNDNETLCENWREIHHLVFHLANTCFAAGLVIPSTLNLHMLFLRGMLCLGCTFFIIWAVLFRCALDIMIWNATFLSINFMHFVYLVYKKRPIKIKKELKGIYHRMFEPLHVSPELFNRLTGQFCEIKTLAKGQTYAVEDKTSVDDRLSILLKGIMKVSYRGHFLHTISANAYIDSPEFRSTEMNRGETFQVTITADDNCVFLCWSRERLTYFLESEPFLYEIFKYLIGKDITTKLYSLNDPTLGKKRKLDTQPSLCSQLSVMEMRNSLASTNDNEDGLQNFLRGTSTTSSQRNKQQEFYNAYGVGPLSHAVFC.

Topologically, residues 1 to 40 (MTTESIFITTLPMDFNSQFDNITIGLNDNETLCENWREIH) are extracellular. 2 N-linked (GlcNAc...) asparagine glycosylation sites follow: N21 and N29. Residues 41-61 (HLVFHLANTCFAAGLVIPSTL) form a helical membrane-spanning segment. The Cytoplasmic segment spans residues 62 to 65 (NLHM). Residues 66-86 (LFLRGMLCLGCTFFIIWAVLF) traverse the membrane as a helical segment. Topologically, residues 87 to 91 (RCALD) are extracellular. A helical transmembrane segment spans residues 92–112 (IMIWNATFLSINFMHFVYLVY). Topologically, residues 113 to 338 (KKRPIKIKKE…VGPLSHAVFC (226 aa)) are cytoplasmic. Residues 296–317 (TNDNEDGLQNFLRGTSTTSSQR) form a disordered region. A compositionally biased stretch (polar residues) spans 307-317 (LRGTSTTSSQR).

The protein belongs to the popeye family. In terms of tissue distribution, expressed in the heart.

It is found in the lateral cell membrane. It localises to the cell junction. Its subcellular location is the tight junction. The protein resides in the membrane. In terms of biological role, cell adhesion molecule involved in the establishment and/or maintenance of cell integrity. Plays a role in vamp3-mediated vesicular transport and recycling of different receptor molecules. May be involved in the formation and regulation of the tight junction (TJ) paracellular permeability barrier in epithelial cells. May induce primordial adhesive contact and aggregation of epithelial cells in a Ca(2+)-independent manner. May be involved in epithelial movement during corneal sheet formation and regeneration. May play a role in the regulation of cell shape and movement by modulating the Rho-GTPase activity. May also be involved in striated muscle regeneration and in the regulation of cell spreading. This Xenopus laevis (African clawed frog) protein is Popeye domain-containing protein 1-A (popdc1-a).